The sequence spans 1197 residues: DExH-box ATP-dependent RNA helicase DExH3 (1197 aa).

One can recognise a Helicase ATP-binding domain in the interval 309-476 (LKAIAANQVV…FGGAPAMHIP (168 aa)). 322–329 (GETGCGKT) contacts ATP. The DEIH box signature appears at 423–426 (DEIH). Residues 564–738 (LIENVLCHIV…SLCLQIKSLG (175 aa)) enclose the Helicase C-terminal domain.

It belongs to the DExH box helicase family.

It catalyses the reaction ATP + H2O = ADP + phosphate + H(+). The polypeptide is DExH-box ATP-dependent RNA helicase DExH3 (Arabidopsis thaliana (Mouse-ear cress)).